A 310-amino-acid polypeptide reads, in one-letter code: MSEPENTAEDKDAEAAISADAVESETTADGGENPAEGESAEGPRMRARRERMERREAQRRAIALEQARREAKAAAKGKYVEQGKGAGRGKVQGLQTLLLVVLLALIAVGLGSILYFTPLMSVRQTVVTGTGVVTQEDVLGALSIPKGTRLLQIDTAAAADRVASIRRVASARVQCEYPSTLRVTIVERVPVAAWTGADGTHLIDRDGVDFANEPPPPGIPALDVVAPAPQDPTTKAALQVLTSLAPDLARQVAKIAAPSVSSITLTLDDGRTIVWGTTERTAEKAEKLGALLTQPGRTYDVSSPDLPTVK.

The tract at residues methionine 1–alanine 57 is disordered. At methionine 1–glutamine 95 the chain is on the cytoplasmic side. Residues threonine 96 to phenylalanine 116 traverse the membrane as a helical segment. The Extracellular segment spans residues threonine 117–lysine 310. The POTRA domain maps to methionine 120–arginine 188.

This sequence belongs to the FtsQ/DivIB family. FtsQ subfamily.

It is found in the cell membrane. In terms of biological role, essential cell division protein. This chain is Cell division protein FtsQ, found in Mycobacteroides abscessus (strain ATCC 19977 / DSM 44196 / CCUG 20993 / CIP 104536 / JCM 13569 / NCTC 13031 / TMC 1543 / L948) (Mycobacterium abscessus).